The chain runs to 362 residues: MNKSRVVVGMSGGVDSSVAALLLKQQGYDVTGLFMKNWEEDDTDEYCSSRQDFLDAASVADILDIPLEVVNFSTEYRERVFNLFLKEYQAGRTPNPDVLCNSEIKFRAFLDHALNLGADWIATGHYAQVHETDGLFQLLKGEDGNKDQSYFLYRLNQQQLSHTIFPIGHLYKREVRKIAREHRLPNSTKKDSTGICFIGERPFREFLNRYLPANPGEIHTLDDQVVGEHLGVMYYTIGQRQGLGIGGTRQGSEQPWFVSGKDIKKNVLYVVQGHDHPALLRSSLTAADLSWISGTPPHQNWVYAAKIRYRQTDAPCAITHFEHDSCQIGFAAPQWGITPGQSVVVYESKVCLGGGVIIGSND.

ATP is bound by residues 9–16 (GMSGGVDS) and M35. Positions 95–97 (NPD) are interaction with target base in tRNA. C100 functions as the Nucleophile in the catalytic mechanism. An intrachain disulfide couples C100 to C196. Position 124 (G124) interacts with ATP. The interval 146–148 (KDQ) is interaction with tRNA. The Cysteine persulfide intermediate role is filled by C196. Residues 308 to 309 (RY) form an interaction with tRNA region.

The protein belongs to the MnmA/TRMU family.

Its subcellular location is the cytoplasm. The catalysed reaction is S-sulfanyl-L-cysteinyl-[protein] + uridine(34) in tRNA + AH2 + ATP = 2-thiouridine(34) in tRNA + L-cysteinyl-[protein] + A + AMP + diphosphate + H(+). Its function is as follows. Catalyzes the 2-thiolation of uridine at the wobble position (U34) of tRNA, leading to the formation of s(2)U34. This chain is tRNA-specific 2-thiouridylase MnmA, found in Nitrosomonas europaea (strain ATCC 19718 / CIP 103999 / KCTC 2705 / NBRC 14298).